The primary structure comprises 320 residues: Mitochondrial glycine transporter (320 aa).

Solcar repeat units lie at residues 8-92 (SKTT…LRQG), 121-205 (LSNW…LKRR), and 223-307 (SSSS…LILR). A run of 6 helical transmembrane segments spans residues 14-39 (FAAGLCSGLTSSILLQPADLLKTRVQ), 67-93 (GTLPSALRTGFGSALYFTSLNALRQGL), 127-152 (LATGAVARTAAGFVMMPVTVLKVRYE), 180-203 (GFGATAARDAPYAGLYVLFYEQLK), 227-253 (INFVSGGLAAGLATAITNPFDAVKTRL), and 282-300 (GLGLRITRKALSSALAWTV).

Belongs to the mitochondrial carrier (TC 2.A.29) family. SLC25A38 subfamily.

The protein resides in the mitochondrion inner membrane. It catalyses the reaction glycine(in) = glycine(out). Functionally, mitochondrial glycine transporter that imports glycine into the mitochondrial matrix. Plays an important role in providing glycine for the first enzymatic step in heme biosynthesis, the condensation of glycine with succinyl-CoA to produce 5-aminolevulinate (ALA) in the mitochondrial matrix. This Aspergillus fumigatus (strain CBS 144.89 / FGSC A1163 / CEA10) (Neosartorya fumigata) protein is Mitochondrial glycine transporter.